The chain runs to 267 residues: Putative carbamate hydrolase RutD (267 aa).

In terms of domain architecture, AB hydrolase-1 spans 14–115 (PVMVMISGLG…SALVIINGWL (102 aa)).

It belongs to the AB hydrolase superfamily. Hydrolase RutD family.

It carries out the reaction carbamate + 2 H(+) = NH4(+) + CO2. In terms of biological role, involved in pyrimidine catabolism. May facilitate the hydrolysis of carbamate, a reaction that can also occur spontaneously. This Cronobacter turicensis (strain DSM 18703 / CCUG 55852 / LMG 23827 / z3032) protein is Putative carbamate hydrolase RutD.